The chain runs to 443 residues: Phosphoglucosamine mutase (443 aa).

Ser100 (phosphoserine intermediate) is an active-site residue. Ser100, Asp240, Asp242, and Asp244 together coordinate Mg(2+). The residue at position 100 (Ser100) is a Phosphoserine.

Belongs to the phosphohexose mutase family. It depends on Mg(2+) as a cofactor. Post-translationally, activated by phosphorylation.

It carries out the reaction alpha-D-glucosamine 1-phosphate = D-glucosamine 6-phosphate. In terms of biological role, catalyzes the conversion of glucosamine-6-phosphate to glucosamine-1-phosphate. The protein is Phosphoglucosamine mutase of Carboxydothermus hydrogenoformans (strain ATCC BAA-161 / DSM 6008 / Z-2901).